Reading from the N-terminus, the 129-residue chain is MKSALTIALFCAGGGLARYYLSGWVYGLLGRAFPFGTLAVNLIGAYCIGLIMEISLRSTLIPATLRLGLTVGFMGGLTTFSTFSYETFKLLEDGQYLVAMVNALASVVMCLLCTWLGVITARALIQGGF.

The next 4 helical transmembrane spans lie at 5–25 (LTIA…SGWV), 32–52 (AFPF…GLIM), 60–80 (LIPA…LTTF), and 99–119 (AMVN…LGVI). Gly-75 and Thr-78 together coordinate Na(+).

This sequence belongs to the fluoride channel Fluc/FEX (TC 1.A.43) family.

The protein localises to the cell inner membrane. The enzyme catalyses fluoride(in) = fluoride(out). Na(+) is not transported, but it plays an essential structural role and its presence is essential for fluoride channel function. Its function is as follows. Fluoride-specific ion channel. Important for reducing fluoride concentration in the cell, thus reducing its toxicity. This is Fluoride-specific ion channel FluC from Pelobacter propionicus (strain DSM 2379 / NBRC 103807 / OttBd1).